Consider the following 89-residue polypeptide: UPF0335 protein Nwi_0989 (89 aa).

This sequence belongs to the UPF0335 family.

In Nitrobacter winogradskyi (strain ATCC 25391 / DSM 10237 / CIP 104748 / NCIMB 11846 / Nb-255), this protein is UPF0335 protein Nwi_0989.